The following is a 455-amino-acid chain: Bifunctional protein GlmU (455 aa).

Residues 1–226 (MIAVAILAAG…YQEILGINDR (226 aa)) are pyrophosphorylase. UDP-N-acetyl-alpha-D-glucosamine contacts are provided by residues 7–10 (LAAG), lysine 21, glutamine 73, and 78–79 (GT). Aspartate 103 lines the Mg(2+) pocket. Residues glycine 140, glutamate 155, asparagine 170, and asparagine 224 each contribute to the UDP-N-acetyl-alpha-D-glucosamine site. Asparagine 224 serves as a coordination point for Mg(2+). Positions 227 to 247 (KQLATAYKILQDRIKDDWLVA) are linker. The tract at residues 248 to 455 (GVTIMDPDSI…RPISSKQTEK (208 aa)) is N-acetyltransferase. 2 residues coordinate UDP-N-acetyl-alpha-D-glucosamine: arginine 329 and lysine 347. Histidine 359 serves as the catalytic Proton acceptor. Positions 362 and 373 each coordinate UDP-N-acetyl-alpha-D-glucosamine. Acetyl-CoA-binding positions include alanine 376, 382–383 (NY), alanine 419, and arginine 436.

This sequence in the N-terminal section; belongs to the N-acetylglucosamine-1-phosphate uridyltransferase family. It in the C-terminal section; belongs to the transferase hexapeptide repeat family. In terms of assembly, homotrimer. It depends on Mg(2+) as a cofactor.

Its subcellular location is the cytoplasm. It carries out the reaction alpha-D-glucosamine 1-phosphate + acetyl-CoA = N-acetyl-alpha-D-glucosamine 1-phosphate + CoA + H(+). It catalyses the reaction N-acetyl-alpha-D-glucosamine 1-phosphate + UTP + H(+) = UDP-N-acetyl-alpha-D-glucosamine + diphosphate. It functions in the pathway nucleotide-sugar biosynthesis; UDP-N-acetyl-alpha-D-glucosamine biosynthesis; N-acetyl-alpha-D-glucosamine 1-phosphate from alpha-D-glucosamine 6-phosphate (route II): step 2/2. Its pathway is nucleotide-sugar biosynthesis; UDP-N-acetyl-alpha-D-glucosamine biosynthesis; UDP-N-acetyl-alpha-D-glucosamine from N-acetyl-alpha-D-glucosamine 1-phosphate: step 1/1. The protein operates within bacterial outer membrane biogenesis; LPS lipid A biosynthesis. Functionally, catalyzes the last two sequential reactions in the de novo biosynthetic pathway for UDP-N-acetylglucosamine (UDP-GlcNAc). The C-terminal domain catalyzes the transfer of acetyl group from acetyl coenzyme A to glucosamine-1-phosphate (GlcN-1-P) to produce N-acetylglucosamine-1-phosphate (GlcNAc-1-P), which is converted into UDP-GlcNAc by the transfer of uridine 5-monophosphate (from uridine 5-triphosphate), a reaction catalyzed by the N-terminal domain. The polypeptide is Bifunctional protein GlmU (Acaryochloris marina (strain MBIC 11017)).